We begin with the raw amino-acid sequence, 100 residues long: MSNTKHTTSHHMELKRIIILTLLFILIMLIFRNSVSFKMTFQELLPRFYKKNSNSVSNNNRPSSIFSENLVDFDDVNMVDKTRLFIFLFFSFIITIPFMV.

2 helical membrane-spanning segments follow: residues 17 to 37 (IIIL…SVSF) and 78 to 98 (MVDK…TIPF).

The protein resides in the endoplasmic reticulum membrane. This is an uncharacterized protein from Saccharomyces cerevisiae (strain ATCC 204508 / S288c) (Baker's yeast).